Reading from the N-terminus, the 541-residue chain is ATP synthase subunit alpha (541 aa).

Residue 173–180 (GDRQTGKT) participates in ATP binding. A compositionally biased stretch (basic and acidic residues) spans 517 to 527 (GIEPGVEEHES). The tract at residues 517–541 (GIEPGVEEHESLGATAVNQETIVKK) is disordered. Residues 532–541 (AVNQETIVKK) are compositionally biased toward polar residues.

It belongs to the ATPase alpha/beta chains family. As to quaternary structure, F-type ATPases have 2 components, CF(1) - the catalytic core - and CF(0) - the membrane proton channel. CF(1) has five subunits: alpha(3), beta(3), gamma(1), delta(1), epsilon(1). CF(0) has three main subunits: a(1), b(2) and c(9-12). The alpha and beta chains form an alternating ring which encloses part of the gamma chain. CF(1) is attached to CF(0) by a central stalk formed by the gamma and epsilon chains, while a peripheral stalk is formed by the delta and b chains.

The protein localises to the cell membrane. It carries out the reaction ATP + H2O + 4 H(+)(in) = ADP + phosphate + 5 H(+)(out). Functionally, produces ATP from ADP in the presence of a proton gradient across the membrane. The alpha chain is a regulatory subunit. The chain is ATP synthase subunit alpha from Kocuria rhizophila (strain ATCC 9341 / DSM 348 / NBRC 103217 / DC2201).